A 360-amino-acid chain; its full sequence is Phospho-N-acetylmuramoyl-pentapeptide-transferase (360 aa).

A run of 10 helical transmembrane segments spans residues 21-41 (YLTL…LWLG), 73-93 (TMGG…WGDL), 94-114 (TNHY…IGWV), 145-165 (AVTL…VPLF), 168-188 (VVVP…VGSS), 199-219 (GLAI…AYAS), 236-256 (AGEL…FLWF), 263-283 (VFMG…VAVI), 288-308 (IVLF…MLQV), and 339-359 (IVRF…TLKI).

It belongs to the glycosyltransferase 4 family. MraY subfamily. Mg(2+) is required as a cofactor.

It is found in the cell inner membrane. The catalysed reaction is UDP-N-acetyl-alpha-D-muramoyl-L-alanyl-gamma-D-glutamyl-meso-2,6-diaminopimeloyl-D-alanyl-D-alanine + di-trans,octa-cis-undecaprenyl phosphate = di-trans,octa-cis-undecaprenyl diphospho-N-acetyl-alpha-D-muramoyl-L-alanyl-D-glutamyl-meso-2,6-diaminopimeloyl-D-alanyl-D-alanine + UMP. The protein operates within cell wall biogenesis; peptidoglycan biosynthesis. Its function is as follows. Catalyzes the initial step of the lipid cycle reactions in the biosynthesis of the cell wall peptidoglycan: transfers peptidoglycan precursor phospho-MurNAc-pentapeptide from UDP-MurNAc-pentapeptide onto the lipid carrier undecaprenyl phosphate, yielding undecaprenyl-pyrophosphoryl-MurNAc-pentapeptide, known as lipid I. This Chromohalobacter salexigens (strain ATCC BAA-138 / DSM 3043 / CIP 106854 / NCIMB 13768 / 1H11) protein is Phospho-N-acetylmuramoyl-pentapeptide-transferase.